Here is a 392-residue protein sequence, read N- to C-terminus: uncharacterized protein (392 aa).

It belongs to the mimivirus L17x/L18x family.

This is an uncharacterized protein from Acanthamoeba polyphaga (Amoeba).